The following is a 138-amino-acid chain: Large ribosomal subunit protein uL16 (138 aa).

Residues 1 to 13 (MLQPARRKYRKEQ) are compositionally biased toward basic residues. The disordered stretch occupies residues 1–22 (MLQPARRKYRKEQKGRNTGVAT).

Belongs to the universal ribosomal protein uL16 family. As to quaternary structure, part of the 50S ribosomal subunit.

In terms of biological role, binds 23S rRNA and is also seen to make contacts with the A and possibly P site tRNAs. This Polaromonas naphthalenivorans (strain CJ2) protein is Large ribosomal subunit protein uL16.